A 515-amino-acid polypeptide reads, in one-letter code: Putative cytochrome P450 CYP13A2 (515 aa).

C460 is a heme binding site.

This sequence belongs to the cytochrome P450 family. Heme is required as a cofactor.

Cytochromes P450 are a group of heme-thiolate monooxygenases. They oxidize a variety of structurally unrelated compounds, including steroids, fatty acids, and xenobiotics. This is Putative cytochrome P450 CYP13A2 (cyp-13A2) from Caenorhabditis elegans.